The chain runs to 92 residues: Phospholemman (92 aa).

The first 20 residues, 1 to 20 (MAPLHHILVLCVGFLTTATA), serve as a signal peptide directing secretion. The Extracellular portion of the chain corresponds to 21–35 (EAPQEHDPFTYDYQS). The chain crosses the membrane as a helical span at residues 36 to 56 (LRIGGLIIAGILFILGILIVL). Topologically, residues 57–92 (SRRCRCKFNQQQRTGEPDEEEGTFRSSIRRLSTRRR) are cytoplasmic. C60 carries S-palmitoyl cysteine lipidation. C62 is subject to S-glutathionyl cysteine; alternate. C62 carries S-palmitoyl cysteine; alternate lipidation. A disordered region spans residues 65-92 (NQQQRTGEPDEEEGTFRSSIRRLSTRRR). T79 bears the Phosphothreonine mark. S82 carries the post-translational modification Phosphoserine. 2 positions are modified to phosphoserine; by PKA and PKC: S83 and S88. Over residues 83–92 (SIRRLSTRRR) the composition is skewed to basic residues. Residue T89 is modified to Phosphothreonine; by PKC.

The protein belongs to the FXYD family. In terms of assembly, homotetramer. Monomer. Regulatory subunit of the sodium/potassium-transporting ATPase (NKA) which is composed of a catalytic alpha subunit, a non-catalytic beta subunit and an additional regulatory subunit. The monomeric form associates with NKA while the oligomeric form does not. Interacts with the catalytic alpha-1 subunit ATP1A1. Also interacts with the catalytic alpha-2 and alpha-3 subunits ATP1A2 and ATP1A3. Very little interaction with the alpha subunits ATP1A1, ATP1A2 or ATP1A3 when phosphorylated at Ser-83. Interacts with non-catalytic beta-1 subunit ATP1B1. Oxidative stress decreases interaction with ATP1A1 but increases interaction with ATP1B1. Post-translationally, major plasma membrane substrate for cAMP-dependent protein kinase (PKA) and protein kinase C (PKC) in several different tissues. Phosphorylated in response to insulin and adrenergic stimulation. Phosphorylation at Ser-88 stimulates sodium/potassium-transporting ATPase activity while the unphosphorylated form inhibits sodium/potassium-transporting ATPase activity. Phosphorylation increases tetramerization, decreases binding to ATP1A1 and reduces inhibition of ATP1A1 activity. Phosphorylation at Ser-83 leads to greatly reduced interaction with ATP1A1, ATP1A2 and ATP1A3. May be phosphorylated by DMPK. In terms of processing, palmitoylation increases half-life and stability and is enhanced upon phosphorylation at Ser-88 by PKA. As to expression, present in heart, esophagus, stomach, aorta, skeletal muscle, smooth muscle, and liver but absent from brain and kidney.

The protein localises to the cell membrane. Its subcellular location is the sarcolemma. It localises to the apical cell membrane. The protein resides in the membrane. It is found in the caveola. The protein localises to the T-tubule. Associates with and regulates the activity of the sodium/potassium-transporting ATPase (NKA) which transports Na(+) out of the cell and K(+) into the cell. Inhibits NKA activity in its unphosphorylated state and stimulates activity when phosphorylated. Reduces glutathionylation of the NKA beta-1 subunit ATP1B1, thus reversing glutathionylation-mediated inhibition of ATP1B1. Contributes to female sexual development by maintaining the excitability of neurons which secrete gonadotropin-releasing hormone. This chain is Phospholemman, found in Canis lupus familiaris (Dog).